A 258-amino-acid chain; its full sequence is Aspartate/glutamate leucyltransferase (258 aa).

Belongs to the R-transferase family. Bpt subfamily.

It is found in the cytoplasm. The catalysed reaction is N-terminal L-glutamyl-[protein] + L-leucyl-tRNA(Leu) = N-terminal L-leucyl-L-glutamyl-[protein] + tRNA(Leu) + H(+). It carries out the reaction N-terminal L-aspartyl-[protein] + L-leucyl-tRNA(Leu) = N-terminal L-leucyl-L-aspartyl-[protein] + tRNA(Leu) + H(+). In terms of biological role, functions in the N-end rule pathway of protein degradation where it conjugates Leu from its aminoacyl-tRNA to the N-termini of proteins containing an N-terminal aspartate or glutamate. This Rhodopseudomonas palustris (strain ATCC BAA-98 / CGA009) protein is Aspartate/glutamate leucyltransferase.